A 420-amino-acid chain; its full sequence is Transcriptional adapter 2-beta (420 aa).

The ZZ-type zinc-finger motif lies at 4 to 59 (LSKKYCVYCLADVTSLRLRCTECQDIELCTDCFSAGAEIGNHRRWHGYQLVDGGRF). Positions 9, 12, 23, 26, 32, 35, 45, and 49 each coordinate Zn(2+). Residues 65–118 (EAEGGWTSREEQLLLDAIEQFGFGNWEDMAAHVGASRTPTEVMEHYVTMYIHGN) form the SANT domain. Residues 303-333 (EESAEYEAARHKREKRKENKNIANSKRGRED) form a disordered region.

It is found in the nucleus. Its function is as follows. Transcriptional coactivator. The polypeptide is Transcriptional adapter 2-beta (tada2b) (Xenopus laevis (African clawed frog)).